The chain runs to 492 residues: G2/mitotic-specific cyclin CLB2 (492 aa).

Residues methionine 1–serine 176 are disordered. Polar residues predominate over residues glutamine 23–threonine 33. The segment covering isoleucine 34–serine 58 has biased composition (low complexity). Over residues glutamate 59–proline 83 the composition is skewed to polar residues. The segment covering alanine 111 to asparagine 135 has biased composition (low complexity). One can recognise a Cyclin N-terminal domain in the interval glutamate 208–asparagine 334.

It belongs to the cyclin family. Cyclin AB subfamily.

In terms of biological role, 2/mitotic-specific cyclin essential for the control of the cell cycle at the G2/M (mitosis) transition. G2/M cyclins accumulate steadily during G2 and are abruptly destroyed at mitosis. Degradation is necessary for the cell to exit from mitosis. Plays a role in morphogenesis by negatively regulating polarized growth. Through binding to CDC28 regulates cytokinesis, partly by phosphorylation of the actomyosin ring component IQG1. Also involved in the phosphorylation of CDC6 and CDC54. This chain is G2/mitotic-specific cyclin CLB2 (CLB2), found in Candida albicans (strain SC5314 / ATCC MYA-2876) (Yeast).